The following is a 56-amino-acid chain: Large ribosomal subunit protein bL32 (56 aa).

Positions 1–16 (MAVQKSKKSRAARGMR) are enriched in basic residues. Positions 1 to 22 (MAVQKSKKSRAARGMRRSHDAL) are disordered.

Belongs to the bacterial ribosomal protein bL32 family.

In Photobacterium profundum (strain SS9), this protein is Large ribosomal subunit protein bL32.